A 432-amino-acid polypeptide reads, in one-letter code: Phosphomethylpyrimidine synthase (432 aa).

Substrate contacts are provided by residues Asn66, Met95, Tyr124, His163, Ser185–Gly187, Asp226–Arg229, and Glu265. His269 contacts Zn(2+). A substrate-binding site is contributed by Tyr292. His333 contacts Zn(2+). [4Fe-4S] cluster contacts are provided by Cys409, Cys412, and Cys416.

This sequence belongs to the ThiC family. It depends on [4Fe-4S] cluster as a cofactor.

The enzyme catalyses 5-amino-1-(5-phospho-beta-D-ribosyl)imidazole + S-adenosyl-L-methionine = 4-amino-2-methyl-5-(phosphooxymethyl)pyrimidine + CO + 5'-deoxyadenosine + formate + L-methionine + 3 H(+). The protein operates within cofactor biosynthesis; thiamine diphosphate biosynthesis. Catalyzes the synthesis of the hydroxymethylpyrimidine phosphate (HMP-P) moiety of thiamine from aminoimidazole ribotide (AIR) in a radical S-adenosyl-L-methionine (SAM)-dependent reaction. In Thermoanaerobacter pseudethanolicus (strain ATCC 33223 / 39E) (Clostridium thermohydrosulfuricum), this protein is Phosphomethylpyrimidine synthase.